A 691-amino-acid polypeptide reads, in one-letter code: Protein 4.2 (691 aa).

Residue Gly2 is the site of N-myristoyl glycine attachment. A band 3 binding region spans residues 31 to 39; it reads LTLRRGQSF. At Ser248 the chain carries Phosphoserine. Tyr570 bears the Phosphotyrosine mark.

The protein belongs to the transglutaminase superfamily. Transglutaminase family. Component of the ankyrin-1 complex in the erythrocyte, composed of ANK1, RHCE, RHAG, SLC4A1, EPB42, GYPA, GYPB and AQP1. Interacts with SLC4A1 (via the cytoplasmic domain); this interaction is mediated by the SLC4A1 Band 3-I dimer. Interacts with ANK1 (via ANK 1-13 repeats). Interacts with AQP1 (via the C-terminal).

It is found in the cell membrane. It localises to the cytoplasm. Its subcellular location is the cytoskeleton. Component of the ankyrin-1 complex, a multiprotein complex involved in the stability and shape of the erythrocyte membrane. The polypeptide is Protein 4.2 (Mus musculus (Mouse)).